Here is a 184-residue protein sequence, read N- to C-terminus: Adenine phosphoribosyltransferase (184 aa).

This sequence belongs to the purine/pyrimidine phosphoribosyltransferase family. Homodimer.

The protein resides in the cytoplasm. The catalysed reaction is AMP + diphosphate = 5-phospho-alpha-D-ribose 1-diphosphate + adenine. Its pathway is purine metabolism; AMP biosynthesis via salvage pathway; AMP from adenine: step 1/1. Catalyzes a salvage reaction resulting in the formation of AMP, that is energically less costly than de novo synthesis. This is Adenine phosphoribosyltransferase from Blochmanniella pennsylvanica (strain BPEN).